The following is a 250-amino-acid chain: Beta-lactamase HcpA (250 aa).

The signal sequence occupies residues 1 to 25 (MLGSVKKTLFGVLCLGALCLRGLMA). TPR repeat units follow at residues 29–62 (AKEL…KEGF), 67–98 (LGAF…NDGY), 100–133 (CRLL…LNHA), 134–169 (EGCT…LKDS), and 170–202 (PGCI…KDGR). Disulfide bonds link C56-C64, C92-C100, C128-C136, C164-C172, C196-C204, and C232-C240.

The protein belongs to the hcp beta-lactamase family.

It localises to the secreted. The enzyme catalyses a beta-lactam + H2O = a substituted beta-amino acid. Inhibited by cloxacillin and oxacillin but not by ACA derivatives or metal chelators. Functionally, slowly hydrolyzes 6-aminopenicillinic acid and 7-aminocephalosporanic acid (ACA) derivatives. May be involved in the synthesis of the cell wall peptidoglycan. The protein is Beta-lactamase HcpA (hcpA) of Helicobacter pylori (strain J99 / ATCC 700824) (Campylobacter pylori J99).